We begin with the raw amino-acid sequence, 734 residues long: Photosystem I P700 chlorophyll a apoprotein A2 (734 aa).

8 helical membrane passes run Ile-46–Ala-69, Leu-135–Gln-158, Leu-175–Ile-199, Ile-273–Tyr-291, Ile-330–Tyr-353, Ala-369–Ile-395, Ala-417–His-439, and Phe-517–Val-535. The [4Fe-4S] cluster site is built by Cys-559 and Cys-568. A run of 2 helical transmembrane segments spans residues Ala-575–Trp-596 and Leu-643–Ile-665. The chlorophyll a site is built by His-654, Met-662, and Tyr-670. Trp-671 serves as a coordination point for phylloquinone. Residues Leu-707–Ala-727 traverse the membrane as a helical segment.

It belongs to the PsaA/PsaB family. In terms of assembly, the PsaA/B heterodimer binds the P700 chlorophyll special pair and subsequent electron acceptors. PSI consists of a core antenna complex that captures photons, and an electron transfer chain that converts photonic excitation into a charge separation. The eukaryotic PSI reaction center is composed of at least 11 subunits. P700 is a chlorophyll a/chlorophyll a' dimer, A0 is one or more chlorophyll a, A1 is one or both phylloquinones and FX is a shared 4Fe-4S iron-sulfur center. serves as cofactor.

The protein resides in the plastid. Its subcellular location is the chloroplast thylakoid membrane. The enzyme catalyses reduced [plastocyanin] + hnu + oxidized [2Fe-2S]-[ferredoxin] = oxidized [plastocyanin] + reduced [2Fe-2S]-[ferredoxin]. In terms of biological role, psaA and PsaB bind P700, the primary electron donor of photosystem I (PSI), as well as the electron acceptors A0, A1 and FX. PSI is a plastocyanin-ferredoxin oxidoreductase, converting photonic excitation into a charge separation, which transfers an electron from the donor P700 chlorophyll pair to the spectroscopically characterized acceptors A0, A1, FX, FA and FB in turn. Oxidized P700 is reduced on the lumenal side of the thylakoid membrane by plastocyanin. This chain is Photosystem I P700 chlorophyll a apoprotein A2, found in Saccharum hybrid (Sugarcane).